We begin with the raw amino-acid sequence, 329 residues long: MSNAKILATGKSVPDSIFTNEDLEKMVETSDSWITSRTGIKERRIADENTATSHLSVQAAEIALNKSGIEPADLDMIIVATVTPDMAFPSTACLVQDKLGADQACAFDLEAACTGFLYGLRIASQFIATDTHKYILVIGSETLSKIVDWEDRNTCVLFGDGAGAAVLGPVENGEEDKGLISFDLGADGSKGELLQQPAGGSLKPATLETVSSKEHFIKMNGNEVFKFAVKVIGDTTEKALKKIDKTTEDIDLFIPHQANQRIIDSATNRLGISKEKTFVNLQNYGNMSAASIPVALDEAIEENLIKEDDLVALVGFGGGLTWGSCLIKW.

Active-site residues include C113 and H256. The tract at residues 257–261 (QANQR) is ACP-binding. Residue N286 is part of the active site.

The protein belongs to the thiolase-like superfamily. FabH family. In terms of assembly, homodimer.

It is found in the cytoplasm. The catalysed reaction is malonyl-[ACP] + acetyl-CoA + H(+) = 3-oxobutanoyl-[ACP] + CO2 + CoA. It participates in lipid metabolism; fatty acid biosynthesis. Functionally, catalyzes the condensation reaction of fatty acid synthesis by the addition to an acyl acceptor of two carbons from malonyl-ACP. Catalyzes the first condensation reaction which initiates fatty acid synthesis and may therefore play a role in governing the total rate of fatty acid production. Possesses both acetoacetyl-ACP synthase and acetyl transacylase activities. Its substrate specificity determines the biosynthesis of branched-chain and/or straight-chain of fatty acids. This chain is Beta-ketoacyl-[acyl-carrier-protein] synthase III, found in Natranaerobius thermophilus (strain ATCC BAA-1301 / DSM 18059 / JW/NM-WN-LF).